We begin with the raw amino-acid sequence, 459 residues long: tRNA modification GTPase MnmE (459 aa).

Residues Arg-22, Glu-85, and Arg-124 each contribute to the (6S)-5-formyl-5,6,7,8-tetrahydrofolate site. One can recognise a TrmE-type G domain in the interval 221 to 380 (GLSTVIVGKP…LEIQIRDLFF (160 aa)). Asn-231 is a K(+) binding site. GTP contacts are provided by residues 231-236 (NVGKSS), 250-256 (TEVAGTT), and 275-278 (DTAG). Ser-235 provides a ligand contact to Mg(2+). 3 residues coordinate K(+): Thr-250, Val-252, and Thr-255. Thr-256 contacts Mg(2+). Lys-459 contacts (6S)-5-formyl-5,6,7,8-tetrahydrofolate.

This sequence belongs to the TRAFAC class TrmE-Era-EngA-EngB-Septin-like GTPase superfamily. TrmE GTPase family. As to quaternary structure, homodimer. Heterotetramer of two MnmE and two MnmG subunits. The cofactor is K(+).

The protein localises to the cytoplasm. Its function is as follows. Exhibits a very high intrinsic GTPase hydrolysis rate. Involved in the addition of a carboxymethylaminomethyl (cmnm) group at the wobble position (U34) of certain tRNAs, forming tRNA-cmnm(5)s(2)U34. This Staphylococcus aureus (strain USA300 / TCH1516) protein is tRNA modification GTPase MnmE.